Reading from the N-terminus, the 568-residue chain is Lariat debranching enzyme (568 aa).

Residues Cys8, His10, Asp39, and Asn84 each coordinate a divalent metal cation. Residues 124–154 form a lariat recognition loop region; that stretch reads SGIFKSHDFKKGHFEFPPYNPETLRSVYHIR. Residues His174, His226, and His228 each coordinate a divalent metal cation. The tract at residues 388-568 is disordered; the sequence is IYGERGGKGA…TAVEDEESDS (181 aa). Positions 417–428 are enriched in polar residues; the sequence is PSDTSGLSSSYN. Acidic residues predominate over residues 432-444; the sequence is ITIEDEWEEEEDG. The span at 467–480 shows a compositional bias: basic and acidic residues; that stretch reads DSDRDSSPQRETAK. Residue Thr478 is modified to Phosphothreonine. Positions 534–549 are enriched in low complexity; the sequence is GETTQSSAGQTGGTPQ. Ser568 is modified (phosphoserine).

This sequence belongs to the lariat debranching enzyme family. Fe(2+) is required as a cofactor. The cofactor is Zn(2+). Mn(2+) serves as cofactor.

The protein resides in the nucleus. Active in presence of diverse metals including Fe(2+), Zn(2+), Mn(2+). Also activated by Ca(2+). Binds two metal cations in two adjacent alpha and beta metal-binding pockets. Its function is as follows. Cleaves the 2'-5' phosphodiester linkage at the branch point of excised lariat intron RNA and converts them into linear molecules that can be subsequently degraded, thereby facilitating ribonucleotide turnover. Linked to its role in pre-mRNA processing mechanism, may also participate in retrovirus replication and have an antiviral cell-intrinsic defense function. In Danio rerio (Zebrafish), this protein is Lariat debranching enzyme (dbr1).